Consider the following 448-residue polypeptide: Histidinol dehydrogenase (448 aa).

Residues Tyr136, Gln197, and Asn220 each contribute to the NAD(+) site. Substrate is bound by residues Ser243, Gln265, and His268. Residues Gln265 and His268 each coordinate Zn(2+). Active-site proton acceptor residues include Glu333 and His334. Substrate contacts are provided by His334, Asp367, Glu421, and His426. Residue Asp367 participates in Zn(2+) binding. Residue His426 participates in Zn(2+) binding.

It belongs to the histidinol dehydrogenase family. Zn(2+) is required as a cofactor.

The catalysed reaction is L-histidinol + 2 NAD(+) + H2O = L-histidine + 2 NADH + 3 H(+). It functions in the pathway amino-acid biosynthesis; L-histidine biosynthesis; L-histidine from 5-phospho-alpha-D-ribose 1-diphosphate: step 9/9. Its function is as follows. Catalyzes the sequential NAD-dependent oxidations of L-histidinol to L-histidinaldehyde and then to L-histidine. This chain is Histidinol dehydrogenase, found in Pseudomonas syringae pv. tomato (strain ATCC BAA-871 / DC3000).